The following is a 150-amino-acid chain: UPF0506 protein SJCHGC02381 (150 aa).

A signal peptide spans methionine 1–serine 18. Asparagine 20, asparagine 24, asparagine 32, asparagine 36, asparagine 48, asparagine 52, asparagine 64, and asparagine 110 each carry an N-linked (GlcNAc...) asparagine glycan. Positions threonine 22–glutamate 49 are disordered. Residues asparagine 36–glutamate 49 show a composition bias toward acidic residues. 3 disulfide bridges follow: cysteine 116/cysteine 130, cysteine 123/cysteine 134, and cysteine 129/cysteine 139.

It belongs to the UPF0506 family.

Its subcellular location is the secreted. In Schistosoma japonicum (Blood fluke), this protein is UPF0506 protein SJCHGC02381.